The following is a 196-amino-acid chain: Agamous-like MADS-box protein AGL70 (196 aa).

Residues Met1–Asp61 form the MADS-box domain. The short motif at Ile8–Ser15 is the Nuclear localization signal element. The K-box domain maps to Ala80 to Leu170.

In terms of tissue distribution, mostly expressed in roots, leaves and flowers, and, to a lower extent, in inflorescence, siliques, pollen and shoots.

The protein resides in the nucleus. In terms of biological role, probable transcription factor involved in the negative regulation of flowering time, probably through the photoperiodic and vernalization pathways; more efficient in cv. Landsberg erecta than in cv. Columbia background. Prevents premature flowering. Involved in the modulation of vernalization impact on flowering according to genotype acclimation to altitude. The sequence is that of Agamous-like MADS-box protein AGL70 from Arabidopsis thaliana (Mouse-ear cress).